We begin with the raw amino-acid sequence, 288 residues long: Peroxisomal protein PEX21 (288 aa).

Residue Cys5 forms a Glycyl cysteine thioester (Cys-Gly) (interchain with G-Cter in ubiquitin) linkage.

Belongs to the peroxin-21 family. In terms of assembly, interacts with PEX7. Interacts with PEX13. Interacts with SES1. In terms of processing, monoubiquitinated at Cys-5; acts as a signal for PEX21 extraction and is required for proper export from peroxisomes and recycling.

Its subcellular location is the cytoplasm. It is found in the cytosol. The protein resides in the peroxisome. In terms of biological role, receptor that mediates peroxisomal import of proteins containing a C-terminal PTS2-type peroxisomal targeting signal via its interaction with PEX7. Interaction with PEX7 only takes place when PEX7 is associated with cargo proteins containing a PTS2 peroxisomal targeting signal. PEX7 along with PTS2-containing cargo proteins are then translocated through the PEX13-PEX14 docking complex together with PEX21. Acts as an activator of the seryl-tRNA synthetase SES1 by increasing its binding to tRNA. The polypeptide is Peroxisomal protein PEX21 (PEX21) (Saccharomyces cerevisiae (strain ATCC 204508 / S288c) (Baker's yeast)).